A 362-amino-acid polypeptide reads, in one-letter code: Porin Omp2b (362 aa).

A signal peptide spans 1–22 (MNIKSLLLGSAAALVAASGAQA).

The protein belongs to the alphaproteobacteria porin family. In terms of assembly, homotrimer.

The protein localises to the cell outer membrane. In terms of biological role, forms passive diffusion pores that allow small molecular weight hydrophilic materials across the outer membrane. This Brucella canis (strain ATCC 23365 / NCTC 10854 / RM-666) protein is Porin Omp2b (omp2b).